The chain runs to 313 residues: Ribosomal RNA small subunit methyltransferase H (313 aa).

S-adenosyl-L-methionine contacts are provided by residues 35 to 37 (GGH), Asp55, Phe79, Asp101, and Gln108.

It belongs to the methyltransferase superfamily. RsmH family.

It localises to the cytoplasm. The catalysed reaction is cytidine(1402) in 16S rRNA + S-adenosyl-L-methionine = N(4)-methylcytidine(1402) in 16S rRNA + S-adenosyl-L-homocysteine + H(+). Functionally, specifically methylates the N4 position of cytidine in position 1402 (C1402) of 16S rRNA. The polypeptide is Ribosomal RNA small subunit methyltransferase H (Salmonella arizonae (strain ATCC BAA-731 / CDC346-86 / RSK2980)).